The chain runs to 304 residues: Secreted mono- and diacylglycerol lipase MDL3 (304 aa).

Positions 1–19 (MIVGPVISLLLSYFVLVSG) are cleaved as a signal peptide. A disulfide bridge links Cys55 with Cys297. Asn161 carries an N-linked (GlcNAc...) asparagine glycan. Ser171 (nucleophile) is an active-site residue. Catalysis depends on residues Asp228 and His281.

This sequence belongs to the AB hydrolase superfamily. Lipase family. Class 3 subfamily.

The protein localises to the secreted. It is found in the cell wall. It catalyses the reaction a monoacylglycerol + H2O = glycerol + a fatty acid + H(+). It carries out the reaction a diacylglycerol + H2O = a monoacylglycerol + a fatty acid + H(+). Secreted lipase involved in Dandruff and seborrheic dermatitis (D/SD) probably via lipase-mediated breakdown of sebaceous lipids and release of irritating free fatty acids. Shows activity against monoglyceride and diglyceride substrates, but not triglyceride substrates and does not exhibit regio-selective production of diacylglycerols. Hydrolyzes distearin, dilinolein, dipalmitoylglycerol and dipalmitolein. Cleaves oleic acid from 1,2 isomers of diolein on both the 1 and the 2 position of the glycerol backbone, resulting mainly in free fatty acids but no monoolein is detected. Shows activity on monoolein and liberates mostly free fatty acids, but can also perform the reverse reaction and produce diolein. In Malassezia globosa (strain ATCC MYA-4612 / CBS 7966) (Dandruff-associated fungus), this protein is Secreted mono- and diacylglycerol lipase MDL3.